The chain runs to 315 residues: Methenyltetrahydromethanopterin cyclohydrolase (315 aa).

Belongs to the MCH family.

It is found in the cytoplasm. It carries out the reaction 5,10-methenyl-5,6,7,8-tetrahydromethanopterin + H2O = N(5)-formyl-5,6,7,8-tetrahydromethanopterin + H(+). Its pathway is one-carbon metabolism; methanogenesis from CO(2); 5,10-methenyl-5,6,7,8-tetrahydromethanopterin from CO(2): step 3/3. Catalyzes the reversible interconversion of 5-formyl-H(4)MPT to methenyl-H(4)MPT(+). The protein is Methenyltetrahydromethanopterin cyclohydrolase of Methanosphaerula palustris (strain ATCC BAA-1556 / DSM 19958 / E1-9c).